The following is a 228-amino-acid chain: uncharacterized protein (228 aa).

Positions 196–228 form a coiled coil; the sequence is VKITELLDKAKISINDLNKTIEKLNETVNKYHG.

This is an uncharacterized protein from Acanthamoeba polyphaga (Amoeba).